Consider the following 741-residue polypeptide: Catalase-peroxidase 2 (741 aa).

An N-terminal signal peptide occupies residues 1–28 (MQKKRVGKSVVAALAIIAMSAGTVAAWA). The tryptophyl-tyrosyl-methioninium (Trp-Tyr) (with M-254) cross-link spans 107 to 228 (WHGAGTYRTY…LAATQMGLIY (122 aa)). Catalysis depends on histidine 108, which acts as the Proton acceptor. A cross-link (tryptophyl-tyrosyl-methioninium (Tyr-Met) (with W-107)) is located at residues 228–254 (YVNPEGPNGNPDPVAAAKDIRDAFGRM). Histidine 269 is a heme b binding site.

Belongs to the peroxidase family. Peroxidase/catalase subfamily. As to quaternary structure, homodimer or homotetramer. Requires heme b as cofactor. Post-translationally, formation of the three residue Trp-Tyr-Met cross-link is important for the catalase, but not the peroxidase activity of the enzyme.

It carries out the reaction H2O2 + AH2 = A + 2 H2O. The enzyme catalyses 2 H2O2 = O2 + 2 H2O. Its function is as follows. Bifunctional enzyme with both catalase and broad-spectrum peroxidase activity. The sequence is that of Catalase-peroxidase 2 from Burkholderia ambifaria (strain ATCC BAA-244 / DSM 16087 / CCUG 44356 / LMG 19182 / AMMD) (Burkholderia cepacia (strain AMMD)).